A 313-amino-acid chain; its full sequence is MVAPMKGQVCVVTGASRGIGRGIALQLCKAGATVYITGRHLDTLRATAQEAQSLGGRCVPVVCDSSQESEVKSLFEQVDREQKGRLDVLVNNAYAGVQAILNTTNKSFWEVPASIWDDINNVGLRGHYLCSVYGARLMVPAGKGLIVIVSSPGGLQHMFNVPYGVGKAACDRLAADCAHELRRHGVSYVSLWPGLVQTEMVKEFMAKEDTPEDPLFKKMKPDFSSAESPEMSGKCVVALATDPNILNLSGKVLPSCDLARRYGLKDIDGRPVKDYFSLGYALSQVSSLGWLNSFLPGFLRVPKWVVTLYNSKF.

An NAD(+)-binding site is contributed by isoleucine 19. The residue at position 21 (arginine 21) is an Omega-N-methylarginine. Aspartate 64 serves as a coordination point for NAD(+). Serine 151 provides a ligand contact to substrate. The NAD(+) site is built by tyrosine 163, lysine 167, and threonine 198. Tyrosine 163 functions as the Proton acceptor in the catalytic mechanism.

It belongs to the short-chain dehydrogenases/reductases (SDR) family.

Its subcellular location is the endoplasmic reticulum. It catalyses the reaction 17alpha-estradiol + NADP(+) = estrone + NADPH + H(+). It carries out the reaction testosterone + NADP(+) = androst-4-ene-3,17-dione + NADPH + H(+). The catalysed reaction is prostaglandin E1 + NADPH + H(+) = prostaglandin F1 + NADP(+). The enzyme catalyses isatin + NADPH + H(+) = 3-hydroxyindolin-2-one + NADP(+). Its function is as follows. NADPH-dependent oxidoreductase which catalyzes the reduction of some steroids (estrone, androstene-3,17-dione and cortisone) as well as prostaglandin E1, isatin and xenobiotics in vitro. May have a role in steroid and/or xenobiotic metabolism. The polypeptide is Dehydrogenase/reductase SDR family member 1 (Mus musculus (Mouse)).